Consider the following 307-residue polypeptide: Estrogen receptor (307 aa).

The nuclear receptor DNA-binding region spans 1-43; it reads GHNDYMCPATNQCTIDKNRRKSCQACRLRKCYEVGMMKGGIRK. The NR C4-type zinc-finger motif lies at 7–31; the sequence is CPATNQCTIDKNRRKSCQACRLRKC. The hinge stretch occupies residues 44-95; it reads DRRGGRILKHKRQREEHDNRNAGAIVERRSPNLWPSPLMITHNKKNSPALSL. One can recognise an NR LBD domain in the interval 96-307; it reads TADQIVSALL…HFRHMSNKGM (212 aa).

Belongs to the nuclear hormone receptor family. NR3 subfamily. Binds DNA as a homodimer. Can form a heterodimer with ER-beta.

The protein resides in the nucleus. Functionally, the steroid hormones and their receptors are involved in the regulation of eukaryotic gene expression and affect cellular proliferation and differentiation in target tissues. This Aspidoscelis uniparens (Desert grassland whiptail lizard) protein is Estrogen receptor (ESR1).